Reading from the N-terminus, the 513-residue chain is Histidine ammonia-lyase (513 aa).

Residues 144-146 constitute a cross-link (5-imidazolinone (Ala-Gly)); that stretch reads ASG. 2,3-didehydroalanine (Ser) is present on S145.

It belongs to the PAL/histidase family. Post-translationally, contains an active site 4-methylidene-imidazol-5-one (MIO), which is formed autocatalytically by cyclization and dehydration of residues Ala-Ser-Gly.

It is found in the cytoplasm. The catalysed reaction is L-histidine = trans-urocanate + NH4(+). It participates in amino-acid degradation; L-histidine degradation into L-glutamate; N-formimidoyl-L-glutamate from L-histidine: step 1/3. The protein is Histidine ammonia-lyase of Streptococcus pyogenes serotype M6 (strain ATCC BAA-946 / MGAS10394).